Consider the following 277-residue polypeptide: Large ribosomal subunit protein mL46 (277 aa).

At Lys-228 the chain carries N6-acetyllysine.

This sequence belongs to the mitochondrion-specific ribosomal protein mL46 family. In terms of assembly, component of the mitochondrial ribosome large subunit (39S) which comprises a 16S rRNA and about 50 distinct proteins.

It is found in the mitochondrion. The chain is Large ribosomal subunit protein mL46 (MRPL46) from Bos taurus (Bovine).